Reading from the N-terminus, the 492-residue chain is Glutamyl-tRNA(Gln) amidotransferase subunit A (492 aa).

Active-site charge relay system residues include Lys-80 and Ser-155. Ser-179 functions as the Acyl-ester intermediate in the catalytic mechanism.

The protein belongs to the amidase family. GatA subfamily. Heterotrimer of A, B and C subunits.

It catalyses the reaction L-glutamyl-tRNA(Gln) + L-glutamine + ATP + H2O = L-glutaminyl-tRNA(Gln) + L-glutamate + ADP + phosphate + H(+). Allows the formation of correctly charged Gln-tRNA(Gln) through the transamidation of misacylated Glu-tRNA(Gln) in organisms which lack glutaminyl-tRNA synthetase. The reaction takes place in the presence of glutamine and ATP through an activated gamma-phospho-Glu-tRNA(Gln). The sequence is that of Glutamyl-tRNA(Gln) amidotransferase subunit A from Mycobacteroides abscessus (strain ATCC 19977 / DSM 44196 / CCUG 20993 / CIP 104536 / JCM 13569 / NCTC 13031 / TMC 1543 / L948) (Mycobacterium abscessus).